A 558-amino-acid polypeptide reads, in one-letter code: Membrane protein insertase YidC (558 aa).

Transmembrane regions (helical) follow at residues 3–23, 364–384, 438–458, 477–497, and 508–528; these read IKRT…FDNW, FVGN…AVFF, LPVV…LASV, PYFI…KLNP, and MMFM…GLVL.

Belongs to the OXA1/ALB3/YidC family. Type 1 subfamily. In terms of assembly, interacts with the Sec translocase complex via SecD. Specifically interacts with transmembrane segments of nascent integral membrane proteins during membrane integration.

It localises to the cell inner membrane. In terms of biological role, required for the insertion and/or proper folding and/or complex formation of integral membrane proteins into the membrane. Involved in integration of membrane proteins that insert both dependently and independently of the Sec translocase complex, as well as at least some lipoproteins. Aids folding of multispanning membrane proteins. The protein is Membrane protein insertase YidC of Burkholderia pseudomallei (strain 668).